The sequence spans 166 residues: Ribosome maturation factor RimP (166 aa).

This sequence belongs to the RimP family.

It localises to the cytoplasm. Required for maturation of 30S ribosomal subunits. The protein is Ribosome maturation factor RimP of Psychrobacter cryohalolentis (strain ATCC BAA-1226 / DSM 17306 / VKM B-2378 / K5).